The sequence spans 259 residues: NADPH-dependent reductase BacG (259 aa).

NADP(+) contacts are provided by residues 12 to 15 (SQGI), 34 to 36 (SRN), 62 to 63 (DM), Ile90, Lys113, and 185 to 191 (GFIATDR).

This sequence belongs to the short-chain dehydrogenases/reductases (SDR) family. In terms of assembly, homodimer.

The protein localises to the cytoplasm. It participates in antibiotic biosynthesis; bacilysin biosynthesis. Functionally, along with the bacABCDEF operon, BacG is involved in the biosynthesis of the nonribosomally synthesized dipeptide antibiotic bacilysin, composed of L-alanine and L-anticapsin. Bacilysin is an irreversible inactivator of the glutaminase domain of glucosamine synthetase. BacG catalyzes the stereoselective reduction of exocyclic-delta(3),delta(5)-dihydro-hydroxyphenylpyruvate (ex-H2HPP), adding a pro-S hydride equivalent to C4 position to yield tetrahydro-hydroxyphenylpyruvate (H4HPP). Although the 3Z,7R-ex-H2HPP isomer is kinetically disfavored by BacB and produced in a smaller quantity than 3E,7R-ex-H2HPP, it is the preferred substrate for the conjugate reduction reaction of BacG. This chain is NADPH-dependent reductase BacG, found in Bacillus subtilis (strain 168).